Reading from the N-terminus, the 253-residue chain is RAD51-associated protein 1 (253 aa).

The interval 32–51 (APLTKKSRTQPKEPKKENKK) is interaction with DNA. Disordered regions lie at residues 33–74 (PLTK…TSLD), 141–169 (DREH…EGND), and 184–244 (KKIK…WVPP). A compositionally biased stretch (acidic residues) spans 154–169 (PDEESEEDSDYREGND). Basic residues predominate over residues 184–195 (KKIKRQTRKEKK). The tract at residues 190 to 241 (TRKEKKTPKSENNTTVMELKSEQTQKMMSTSSEPVGRPLYTSSPVTNKKPKW) is interaction with DNA. Residues 199–222 (SENNTTVMELKSEQTQKMMSTSSE) show a composition bias toward polar residues.

In terms of assembly, monomer.

It is found in the chromosome. Its subcellular location is the nucleus. Structure-specific DNA-binding protein involved in DNA repair by promoting RAD51-mediated homologous recombination. Acts by stimulating D-Loop formation by RAD51: specifically enhances joint molecule formation through its structure-specific DNA interaction and its interaction with RAD51. Binds single-stranded DNA (ssDNA), double-stranded DNA (dsDNA) and secondary DNA structures, such as D-loop structures: has a strong preference for branched-DNA structures that are obligatory intermediates during joint molecule formation. Involved in mitotic recombination-dependent replication fork processing. Also involved in meiosis by promoting DMC1-mediated homologous meiotic recombination. The chain is RAD51-associated protein 1 from Gallus gallus (Chicken).